A 108-amino-acid chain; its full sequence is Evasin P1229 (108 aa).

The N-terminal stretch at 1 to 31 is a signal peptide; it reads MEVRTFAFLQIVVFVALGIQLFAAVTDAADA. 3 disulfide bridges follow: Cys41–Cys63, Cys45–Cys65, and Cys56–Cys76. Asn44 carries an N-linked (GlcNAc...) asparagine glycan. Residues 88–108 form a disordered region; sequence GDPNNSDLDAATPRHPDASSR. Residue Asn91 is glycosylated (N-linked (GlcNAc...) asparagine). Basic and acidic residues predominate over residues 99–108; sequence TPRHPDASSR.

The protein localises to the secreted. In terms of biological role, salivary chemokine-binding protein which binds to host chemokines CXCL1 and CXCL8. The sequence is that of Evasin P1229 from Ixodes ricinus (Common tick).